A 369-amino-acid chain; its full sequence is Ubiquinone biosynthesis protein COQ4, mitochondrial (369 aa).

The N-terminal 28 residues, 1–28 (MTSILGSARPLIQVGPKSRNASTSMSRL), are a transit peptide targeting the mitochondrion. A disordered region spans residues 1–70 (MTSILGSARP…NPTNASRHPR (70 aa)). 2 stretches are compositionally biased toward polar residues: residues 19 to 33 (RNASTSMSRLPSFPT) and 47 to 66 (YATISPTAPRSSQRNPTNAS). 4 residues coordinate Zn(2+): histidine 198, aspartate 199, histidine 202, and glutamate 214. A disordered region spans residues 330–369 (FSGRAKKGGKRRGWPSKILEHQKAQHQQQQQQQKVDESRN). The span at 332-343 (GRAKKGGKRRGW) shows a compositional bias: basic residues.

The protein belongs to the COQ4 family. As to quaternary structure, component of a multi-subunit COQ enzyme complex, composed of at least COQ3, COQ4, COQ5, COQ6, COQ7 and COQ9. The cofactor is Zn(2+).

It localises to the mitochondrion inner membrane. The enzyme catalyses a 4-hydroxy-3-methoxy-5-(all-trans-polyprenyl)benzoate + H(+) = a 2-methoxy-6-(all-trans-polyprenyl)phenol + CO2. It functions in the pathway cofactor biosynthesis; ubiquinone biosynthesis. In terms of biological role, lyase that catalyzes the C1-decarboxylation of 4-hydroxy-3-methoxy-5-(all-trans-polyprenyl)benzoic acid into 2-methoxy-6-(all-trans-polyprenyl)phenol during ubiquinone biosynthesis. This chain is Ubiquinone biosynthesis protein COQ4, mitochondrial, found in Mycosarcoma maydis (Corn smut fungus).